Here is a 142-residue protein sequence, read N- to C-terminus: MATKIDKEACRTAYNLVRDDSSAVIWVTFKYDGSTIVPGEQGAEYQDFIQQCTDDVRLFAFVRFTTGDAMSKRSKFALITWIGENVSGLQRAKTGTDKTLVKEVVQNFAKEFVISDRKELEEDFIKNELKKAGGANYDAQTE.

Ala-2 carries the N-acetylalanine modification. The 129-residue stretch at 2–130 (ATKIDKEACR…EEDFIKNELK (129 aa)) folds into the ADF-H domain. Residues 66-75 (TGDAMSKRSK) are flexible and important for F-actin binding. Residues Lys-102 and Lys-126 each carry the N6-acetyllysine modification.

Belongs to the actin-binding proteins ADF family. Coactosin subfamily. As to quaternary structure, interacts with 5-lipoxygenase (ALOX5/5LO) in a calcium-independent manner. Binds to F-actin with a stoichiometry of 1:2.

It localises to the cytoplasm. The protein resides in the cytoskeleton. Its subcellular location is the nucleus. Binds to F-actin in a calcium-independent manner. Has no direct effect on actin depolymerization. Acts as a chaperone for ALOX5 (5LO), influencing both its stability and activity in leukotrienes synthesis. This is Coactosin-like protein (COTL1) from Bos taurus (Bovine).